We begin with the raw amino-acid sequence, 195 residues long: Auxin-induced protein AUX22 (195 aa).

The EAR-like (transcriptional repression) motif lies at 13–17 (LRLGL). The interval 37 to 60 (FSEIDDGVGDENSSSGGGDRKMET) is disordered. The region spanning 86–174 (KMYVKVSMDG…KRLRIMKKSD (89 aa)) is the PB1 domain.

It belongs to the Aux/IAA family. As to quaternary structure, homodimers and heterodimers.

The protein localises to the nucleus. In terms of biological role, aux/IAA proteins are short-lived transcriptional factors that function as repressors of early auxin response genes at low auxin concentrations. Repression is thought to result from the interaction with auxin response factors (ARFs), proteins that bind to the auxin-responsive promoter element (AuxRE). Formation of heterodimers with ARF proteins may alter their ability to modulate early auxin response genes expression. The polypeptide is Auxin-induced protein AUX22 (AUX22) (Glycine max (Soybean)).